The following is a 916-amino-acid chain: DNA mismatch repair protein MutS (916 aa).

665–672 contacts ATP; sequence GPNMAGKS.

Belongs to the DNA mismatch repair MutS family.

Functionally, this protein is involved in the repair of mismatches in DNA. It is possible that it carries out the mismatch recognition step. This protein has a weak ATPase activity. The sequence is that of DNA mismatch repair protein MutS from Bradyrhizobium sp. (strain ORS 278).